Consider the following 1083-residue polypeptide: Solute carrier family 12 member 7 (1083 aa).

The segment at 1 to 51 is disordered; that stretch reads MPTNFTVVPVEARADGAGDEAAERTEEPGSPESADPACPTPGDGNPRENSP. Residues 1 to 119 lie on the Cytoplasmic side of the membrane; it reads MPTNFTVVPV…RREIKAPRMG (119 aa). Positions 12 to 27 are enriched in basic and acidic residues; the sequence is ARADGAGDEAAERTEE. Residues Ser-30, Ser-33, Ser-50, and Ser-62 each carry the phosphoserine modification. The discontinuously helical transmembrane segment at 120-142 threads the bilayer; the sequence is TFIGVYLPCLQNILGVILFLRLT. 2 residues coordinate K(+): Asn-131 and Ile-132. Val-135 contacts chloride. The Extracellular portion of the chain corresponds to 143–149; sequence WIVGAAG. The helical transmembrane segment at 150-172 threads the bilayer; sequence VLESFLIVAMCCTCTMLTAISMS. Residues 173–196 are Cytoplasmic-facing; it reads AIATNGVVPAGGSYYMISRSLGPE. A helical membrane pass occupies residues 197–225; it reads FGGAVGLCFYLGTTFAGAMYILGTIEIFL. At 226 to 249 the chain is on the extracellular side; the sequence is TYISPSAAIFQAETADGEAAALLN. A run of 2 helical transmembrane segments spans residues 250 to 271 and 272 to 300; these read NMRV…VGVK and YVNK…KTAF. Residues 301-419 lie on the Extracellular side of the membrane; that stretch reads APPDIPVCLL…PYVLTDIMTY (119 aa). 3 N-linked (GlcNAc...) asparagine glycosylation sites follow: Asn-312, Asn-331, and Asn-360. The helical transmembrane segment at 420-440 threads the bilayer; that stretch reads FTMLVGIYFPSVTGIMAGSNR. Residues Pro-429 and Thr-432 each contribute to the K(+) site. Pro-429 is a binding site for chloride. Chloride is bound by residues Gly-433 and Ile-434. Over 441 to 450 the chain is Cytoplasmic; sequence SGDLKDAQKS. The chain crosses the membrane as a helical span at residues 451-473; the sequence is IPTGTILAIVTTSFIYLSCIVLF. Residues 474–504 are Extracellular-facing; it reads GACIEGVVLRDKFGEALQGNLVIGMLAWPSP. The helical transmembrane segment at 505 to 531 threads the bilayer; that stretch reads WVIVIGSFFSTCGAGLQSLTGAPRLLQ. Residues 532 to 554 are Cytoplasmic-facing; the sequence is AIARDGIIPFLQVFGHGKANGEP. A run of 2 helical transmembrane segments spans residues 555 to 573 and 574 to 598; these read TWAL…LIAS and LDSV…ACAV. Tyr-589 provides a ligand contact to chloride. The Cytoplasmic portion of the chain corresponds to 599–612; it reads QTLLRTPNWRPRFK. 2 helical membrane-spanning segments follow: residues 613 to 635 and 636 to 651; these read FYHW…ICSW and YYAL…IYKY. Residues 652-1083 are Cytoplasmic-facing; it reads IEYRGAEKEW…GGREVITIYS (432 aa). Residues 664–680 form a scissor helix region; it reads GIRGLSLNAARYALLRV. 2 positions are modified to phosphothreonine: Thr-973 and Thr-980.

It belongs to the SLC12A transporter family. K/Cl co-transporter subfamily. As to quaternary structure, homodimer; adopts a domain-swap conformation at the scissor helices connecting the transmembrane domain and C-terminal domain. Heterodimer with K-Cl cotransporter SLC12A5. Widely expressed with highest levels in kidney, liver and pancreas. Expressed in choroid plexus and suprachiasmatic nucleus.

Its subcellular location is the cell membrane. It catalyses the reaction K(+)(in) + chloride(in) = K(+)(out) + chloride(out). With respect to regulation, activated by N-ethylmaleimide (NEM). Inhibited by furosemide, DIDS and bumetanide. The inhibition is much stronger in the presence of 50 mM K(+) in the uptake medium. Inhibited by DIOA. Inhibited by WNK3. Mediates electroneutral potassium-chloride cotransport when activated by cell swelling. May mediate K(+) uptake into Deiters' cells in the cochlea and contribute to K(+) recycling in the inner ear. Important for the survival of cochlear outer and inner hair cells and the maintenance of the organ of Corti. May be required for basolateral Cl(-) extrusion in the kidney and contribute to renal acidification. The sequence is that of Solute carrier family 12 member 7 from Rattus norvegicus (Rat).